The following is a 348-amino-acid chain: Uroporphyrinogen decarboxylase (348 aa).

Residues 27-31 (RQAGR), phenylalanine 46, aspartate 76, tyrosine 152, serine 207, and histidine 320 each bind substrate.

It belongs to the uroporphyrinogen decarboxylase family. Homodimer.

It is found in the cytoplasm. It carries out the reaction uroporphyrinogen III + 4 H(+) = coproporphyrinogen III + 4 CO2. It participates in porphyrin-containing compound metabolism; protoporphyrin-IX biosynthesis; coproporphyrinogen-III from 5-aminolevulinate: step 4/4. Functionally, catalyzes the decarboxylation of four acetate groups of uroporphyrinogen-III to yield coproporphyrinogen-III. This chain is Uroporphyrinogen decarboxylase, found in Bacillus cereus (strain AH820).